Here is a 352-residue protein sequence, read N- to C-terminus: Photosystem II D2 protein (352 aa).

Residue Thr2 is modified to N-acetylthreonine. The residue at position 2 (Thr2) is a Phosphothreonine. Residues 40–60 (CAYFALGGWLTGTTFVTSWYT) traverse the membrane as a helical segment. His117 provides a ligand contact to chlorophyll a. A helical membrane pass occupies residues 124–140 (GFMLRQFEIARSVNLRP). The pheophytin a site is built by Gln129 and Asn142. The helical transmembrane segment at 152 to 165 (VFVSVFLIYPLGQS) threads the bilayer. Chlorophyll a is bound at residue His197. Residues 207–227 (AALLCAIHGATVENTLFEDGD) form a helical membrane-spanning segment. The a plastoquinone site is built by His214 and Phe261. Position 214 (His214) interacts with Fe cation. His268 contacts Fe cation. A helical membrane pass occupies residues 278-294 (GLWMSAIGVVGLALNLR).

The protein belongs to the reaction center PufL/M/PsbA/D family. PSII is composed of 1 copy each of membrane proteins PsbA, PsbB, PsbC, PsbD, PsbE, PsbF, PsbH, PsbI, PsbJ, PsbK, PsbL, PsbM, PsbT, PsbX, PsbY, PsbZ, Psb30/Ycf12, at least 3 peripheral proteins of the oxygen-evolving complex and a large number of cofactors. It forms dimeric complexes. The D1/D2 heterodimer binds P680, chlorophylls that are the primary electron donor of PSII, and subsequent electron acceptors. It shares a non-heme iron and each subunit binds pheophytin, quinone, additional chlorophylls, carotenoids and lipids. There is also a Cl(-1) ion associated with D1 and D2, which is required for oxygen evolution. The PSII complex binds additional chlorophylls, carotenoids and specific lipids. is required as a cofactor. In terms of processing, phosphorylated in vitro.

Its subcellular location is the plastid. The protein resides in the chloroplast thylakoid membrane. The catalysed reaction is 2 a plastoquinone + 4 hnu + 2 H2O = 2 a plastoquinol + O2. Functionally, photosystem II (PSII) is a light-driven water:plastoquinone oxidoreductase that uses light energy to abstract electrons from H(2)O, generating O(2) and a proton gradient subsequently used for ATP formation. It consists of a core antenna complex that captures photons, and an electron transfer chain that converts photonic excitation into a charge separation. The D1/D2 (PsbA/PsbD) reaction center heterodimer binds P680, the primary electron donor of PSII as well as several subsequent electron acceptors. D2 is needed for assembly of a stable PSII complex. In Chlamydomonas reinhardtii (Chlamydomonas smithii), this protein is Photosystem II D2 protein.